Reading from the N-terminus, the 621-residue chain is Putative DNA 3'-5' helicase Rad25 (621 aa).

Positions 268-417 constitute a Helicase ATP-binding domain; sequence VERFTEQGSG…EIFTLIGPPI (150 aa). 281 to 288 contributes to the ATP binding site; that stretch reads GPPGSGKT. The DEAH box signature appears at 371–374; the sequence is DEVH. The segment at 441 to 465 is disordered; the sequence is PWGDETEQSEYSSTSGHDRRQAAAS. A Helicase C-terminal domain is found at 469–621; it reads KIDEIRYALA…EAVEPPAKTE (153 aa).

Belongs to the helicase family. RAD25/XPB subfamily.

The catalysed reaction is Couples ATP hydrolysis with the unwinding of duplex DNA by translocating in the 3'-5' direction.. It carries out the reaction ATP + H2O = ADP + phosphate + H(+). The protein is Putative DNA 3'-5' helicase Rad25 of Haloarcula marismortui (strain ATCC 43049 / DSM 3752 / JCM 8966 / VKM B-1809) (Halobacterium marismortui).